Here is a 376-residue protein sequence, read N- to C-terminus: 3-dehydroquinate synthase (376 aa).

NAD(+) contacts are provided by residues 115–119, 139–140, Lys-152, and Lys-161; these read GVIGD and TS. Residues Glu-194, His-256, and His-275 each contribute to the Zn(2+) site.

This sequence belongs to the sugar phosphate cyclases superfamily. Dehydroquinate synthase family. The cofactor is Co(2+). Zn(2+) serves as cofactor. NAD(+) is required as a cofactor.

It is found in the cytoplasm. It carries out the reaction 7-phospho-2-dehydro-3-deoxy-D-arabino-heptonate = 3-dehydroquinate + phosphate. It participates in metabolic intermediate biosynthesis; chorismate biosynthesis; chorismate from D-erythrose 4-phosphate and phosphoenolpyruvate: step 2/7. Functionally, catalyzes the conversion of 3-deoxy-D-arabino-heptulosonate 7-phosphate (DAHP) to dehydroquinate (DHQ). The polypeptide is 3-dehydroquinate synthase (Rhizobium etli (strain CIAT 652)).